A 201-amino-acid polypeptide reads, in one-letter code: MELVMKDAQGALTVSETTFGRDFNEALVHQVVVAYAAGARQGTRAQKTRAEVSGSGKKPWRQKGTGRARSGSIKSPIWRSGGVTFAAKPQDHSQKVNKKMYRGALKSILSELVRQDRLIVVEKFSVEAPKTKLLVQKLKEMALEDVLIITNEVDENLFLAARNLYKVDVRDVAGIDPVSLIAFDKVVMTADAVKQVEEMLA.

The interval 44 to 71 (RAQKTRAEVSGSGKKPWRQKGTGRARSG) is disordered.

Belongs to the universal ribosomal protein uL4 family. In terms of assembly, part of the 50S ribosomal subunit.

Its function is as follows. One of the primary rRNA binding proteins, this protein initially binds near the 5'-end of the 23S rRNA. It is important during the early stages of 50S assembly. It makes multiple contacts with different domains of the 23S rRNA in the assembled 50S subunit and ribosome. In terms of biological role, forms part of the polypeptide exit tunnel. This Photorhabdus laumondii subsp. laumondii (strain DSM 15139 / CIP 105565 / TT01) (Photorhabdus luminescens subsp. laumondii) protein is Large ribosomal subunit protein uL4.